Here is a 460-residue protein sequence, read N- to C-terminus: tRNA modification GTPase MnmE (460 aa).

(6S)-5-formyl-5,6,7,8-tetrahydrofolate contacts are provided by Arg-22, Glu-87, and Arg-126. The region spanning 222–381 is the TrmE-type G domain; that stretch reads GLKTAIIGKP…LENTIYNLVF (160 aa). Residue Asn-232 participates in K(+) binding. GTP contacts are provided by residues 232–237, 251–257, and 276–279; these read NVGKSS, TDIPGTT, and DTAG. Ser-236 is a binding site for Mg(2+). Residues Thr-251, Ile-253, and Thr-256 each contribute to the K(+) site. Thr-257 is a Mg(2+) binding site. Lys-460 contacts (6S)-5-formyl-5,6,7,8-tetrahydrofolate.

The protein belongs to the TRAFAC class TrmE-Era-EngA-EngB-Septin-like GTPase superfamily. TrmE GTPase family. As to quaternary structure, homodimer. Heterotetramer of two MnmE and two MnmG subunits. It depends on K(+) as a cofactor.

Its subcellular location is the cytoplasm. Exhibits a very high intrinsic GTPase hydrolysis rate. Involved in the addition of a carboxymethylaminomethyl (cmnm) group at the wobble position (U34) of certain tRNAs, forming tRNA-cmnm(5)s(2)U34. The sequence is that of tRNA modification GTPase MnmE from Thermoanaerobacter sp. (strain X514).